A 396-amino-acid chain; its full sequence is Fumarate--(S)-2,3-diaminopropanoate ligase (396 aa).

The catalysed reaction is (S)-2,3-diaminopropanoate + fumarate + ATP = N(3)-fumaroyl-(S)-2,3-diaminopropanoate + AMP + diphosphate. Its pathway is antibiotic biosynthesis. Involved in dapdiamide antibiotics biosynthesis. Ligates fumarate and 2,3-diaminopropionate (DAP) to form N-beta-fumaroyl-DAP. Can also form N-succinoyl-DAP from succinate and DAP, with lower efficiency. The protein is Fumarate--(S)-2,3-diaminopropanoate ligase of Enterobacter agglomerans (Erwinia herbicola).